A 345-amino-acid polypeptide reads, in one-letter code: Phosphoribosylformylglycinamidine cyclo-ligase (345 aa).

Belongs to the AIR synthase family.

The protein localises to the cytoplasm. The catalysed reaction is 2-formamido-N(1)-(5-O-phospho-beta-D-ribosyl)acetamidine + ATP = 5-amino-1-(5-phospho-beta-D-ribosyl)imidazole + ADP + phosphate + H(+). Its pathway is purine metabolism; IMP biosynthesis via de novo pathway; 5-amino-1-(5-phospho-D-ribosyl)imidazole from N(2)-formyl-N(1)-(5-phospho-D-ribosyl)glycinamide: step 2/2. The polypeptide is Phosphoribosylformylglycinamidine cyclo-ligase (Myxococcus xanthus (strain DK1622)).